Reading from the N-terminus, the 234-residue chain is Protein CIST1 (234 aa).

The first 24 residues, 1 to 24 (MACPQLPPLLLLVLVVLLKAGVNY), serve as a signal peptide directing secretion. At 25–180 (NTPFTDIVTS…GPRELHRNPS (156 aa)) the chain is on the extracellular side. Positions 41 to 121 (SPVSSLISSP…THPSSGSPSA (81 aa)) are enriched in polar residues. A disordered region spans residues 41–174 (SPVSSLISSP…PAPGDTGPRE (134 aa)). Low complexity predominate over residues 122–140 (ELTPSSHSTLPSSESLTPH). Residues 141–159 (WSPTSHSPGTEPLTSTDQT) are compositionally biased toward polar residues. A helical transmembrane segment spans residues 181–201 (VVVVVCLLVSLLLIGSVVMAV). At 202–234 (RFCHRNESKFENLDEVSMGSVNDRLSFAHHLQE) the chain is on the cytoplasmic side.

The protein localises to the membrane. The chain is Protein CIST1 from Homo sapiens (Human).